The primary structure comprises 359 residues: Gap junction alpha-5 protein (359 aa).

Residues M1 to T19 lie on the Cytoplasmic side of the membrane. Residues V20–A40 traverse the membrane as a helical segment. Residues A41 to R76 are Extracellular-facing. Residues Y77 to V97 traverse the membrane as a helical segment. The Cytoplasmic segment spans residues H98–E165. A helical transmembrane segment spans residues V166–C186. The Extracellular portion of the chain corresponds to R187–N206. A helical transmembrane segment spans residues V207 to L227. Over Y228 to V359 the chain is Cytoplasmic. Disordered stretches follow at residues S285–Q305 and R317–V359. Phosphoserine is present on residues S354 and S358.

Belongs to the connexin family. Alpha-type (group II) subfamily. A connexon is composed of a hexamer of connexins.

It localises to the cell membrane. Its subcellular location is the cell junction. It is found in the gap junction. In terms of biological role, one gap junction consists of a cluster of closely packed pairs of transmembrane channels, the connexons, through which materials of low MW diffuse from one cell to a neighboring cell. This chain is Gap junction alpha-5 protein (GJA5), found in Bos taurus (Bovine).